We begin with the raw amino-acid sequence, 417 residues long: Exodeoxyribonuclease 7 large subunit (417 aa).

This sequence belongs to the XseA family. As to quaternary structure, heterooligomer composed of large and small subunits.

The protein resides in the cytoplasm. The enzyme catalyses Exonucleolytic cleavage in either 5'- to 3'- or 3'- to 5'-direction to yield nucleoside 5'-phosphates.. Bidirectionally degrades single-stranded DNA into large acid-insoluble oligonucleotides, which are then degraded further into small acid-soluble oligonucleotides. This chain is Exodeoxyribonuclease 7 large subunit, found in Corynebacterium glutamicum (strain ATCC 13032 / DSM 20300 / JCM 1318 / BCRC 11384 / CCUG 27702 / LMG 3730 / NBRC 12168 / NCIMB 10025 / NRRL B-2784 / 534).